Reading from the N-terminus, the 207-residue chain is 8-oxoguanine DNA glycosylase/AP lyase (207 aa).

Catalysis depends on residues Lys129 and Asp147.

It belongs to the type-2 OGG1 family.

It carries out the reaction 2'-deoxyribonucleotide-(2'-deoxyribose 5'-phosphate)-2'-deoxyribonucleotide-DNA = a 3'-end 2'-deoxyribonucleotide-(2,3-dehydro-2,3-deoxyribose 5'-phosphate)-DNA + a 5'-end 5'-phospho-2'-deoxyribonucleoside-DNA + H(+). Catalyzes the excision of an oxidatively damaged form of guanine (7,8-dihydro-8-oxoguanine = 8-oxoG) from DNA. Also cleaves the DNA backbone at apurinic/apyrimidinic sites (AP sites). The protein is 8-oxoguanine DNA glycosylase/AP lyase of Thermotoga sp. (strain RQ2).